Consider the following 352-residue polypeptide: UDP-3-O-acylglucosamine N-acyltransferase (352 aa).

His-244 acts as the Proton acceptor in catalysis.

This sequence belongs to the transferase hexapeptide repeat family. LpxD subfamily. In terms of assembly, homotrimer.

The enzyme catalyses a UDP-3-O-[(3R)-3-hydroxyacyl]-alpha-D-glucosamine + a (3R)-hydroxyacyl-[ACP] = a UDP-2-N,3-O-bis[(3R)-3-hydroxyacyl]-alpha-D-glucosamine + holo-[ACP] + H(+). It functions in the pathway bacterial outer membrane biogenesis; LPS lipid A biosynthesis. Its function is as follows. Catalyzes the N-acylation of UDP-3-O-acylglucosamine using 3-hydroxyacyl-ACP as the acyl donor. Is involved in the biosynthesis of lipid A, a phosphorylated glycolipid that anchors the lipopolysaccharide to the outer membrane of the cell. In Leptospira biflexa serovar Patoc (strain Patoc 1 / Ames), this protein is UDP-3-O-acylglucosamine N-acyltransferase.